Here is a 180-residue protein sequence, read N- to C-terminus: Inner membrane-spanning protein YciB (180 aa).

The next 5 membrane-spanning stretches (helical) occupy residues 10–30, 47–67, 74–94, 121–141, and 151–171; these read IIAFFVFYKLADIYVATGVLM, ITTRHWVILAVVMLFGAVTLL, IKMKVSVVYVAIALMLLGGLI, YAWIIFCLALAAVNLYIAEFW, and VFGILGISLVFTIGTGFYMYH.

The protein belongs to the YciB family.

It localises to the cell inner membrane. Its function is as follows. Plays a role in cell envelope biogenesis, maintenance of cell envelope integrity and membrane homeostasis. This is Inner membrane-spanning protein YciB from Idiomarina loihiensis (strain ATCC BAA-735 / DSM 15497 / L2-TR).